A 244-amino-acid chain; its full sequence is MSVLDLHALNALEKDARAGALADTNAQLEALSAEARVSWALENLPGEFVLSSSFGIQAAVCLHLVTQQRPDIPVILTDTGYLFPETYRFIDELTEKLNLNLKIYRAEQSPAWQEARYGKLWEQGVEGIEKYNDINKVEPMNRALKELNAQTWFAGLRRDQSGSRANLPVLGVQRGVFKILPIIDWDNRTVYQYLQKHGLKYHPLWDEGYLSVGDTHTTRKWEPGMAEEETRFFGLKRECGLHEG.

Cysteine 239 serves as the catalytic Nucleophile; cysteine thiosulfonate intermediate.

It belongs to the PAPS reductase family. CysH subfamily.

Its subcellular location is the cytoplasm. The catalysed reaction is [thioredoxin]-disulfide + sulfite + adenosine 3',5'-bisphosphate + 2 H(+) = [thioredoxin]-dithiol + 3'-phosphoadenylyl sulfate. The protein operates within sulfur metabolism; hydrogen sulfide biosynthesis; sulfite from sulfate: step 3/3. In terms of biological role, catalyzes the formation of sulfite from phosphoadenosine 5'-phosphosulfate (PAPS) using thioredoxin as an electron donor. The sequence is that of Phosphoadenosine 5'-phosphosulfate reductase from Cronobacter sakazakii (strain ATCC BAA-894) (Enterobacter sakazakii).